The following is a 149-amino-acid chain: MFCPFCSIQETKVIDSRLVADGHQVRRRRECTMCKERFTTFEMAELVMPRVVKRDGSREPFNEDKLRAGLQRALEKRPVSTEQVEQCISRLKSAMRATGEREITSEYLGNLIMDALKELDKVAYVRFASVYRSFEDIREFGEEIARLGD.

Residues 3–34 (CPFCSIQETKVIDSRLVADGHQVRRRRECTMC) fold into a zinc finger. Residues 49–139 (PRVVKRDGSR…VYRSFEDIRE (91 aa)) enclose the ATP-cone domain.

It belongs to the NrdR family. The cofactor is Zn(2+).

Functionally, negatively regulates transcription of bacterial ribonucleotide reductase nrd genes and operons by binding to NrdR-boxes. The sequence is that of Transcriptional repressor NrdR from Pseudoalteromonas atlantica (strain T6c / ATCC BAA-1087).